Here is a 224-residue protein sequence, read N- to C-terminus: MKLNPLILGLLLSFSAGHSLADVVLKVPENIDLLSVNMQKPKSEGGLFGDKTIMLKDGTNQIVFRYIPTFDDGDDVKKVYSDTIIAKFESENATLHFKIPSYRNIKEANEKIQTMEWQLVDEKGQSVALVEDKLLNPGVQWGRNYSQEATEYNQNGGVAAIGYLKVVTNEAQLSENTTQVIMSEASQPLEVVGSSNNLTQLQLWYSKASKEERKAFKKWMVDQE.

The first 21 residues, 1–21 (MKLNPLILGLLLSFSAGHSLA), serve as a signal peptide directing secretion.

It belongs to the UPF0319 family.

This is UPF0319 protein VC_1853 from Vibrio cholerae serotype O1 (strain ATCC 39315 / El Tor Inaba N16961).